Here is a 324-residue protein sequence, read N- to C-terminus: Glyoxylate/hydroxypyruvate reductase B (324 aa).

Active-site residues include R237 and E266. The active-site Proton donor is the H285.

Belongs to the D-isomer specific 2-hydroxyacid dehydrogenase family. GhrB subfamily. In terms of assembly, homodimer.

The protein resides in the cytoplasm. It catalyses the reaction glycolate + NADP(+) = glyoxylate + NADPH + H(+). The enzyme catalyses (R)-glycerate + NAD(+) = 3-hydroxypyruvate + NADH + H(+). The catalysed reaction is (R)-glycerate + NADP(+) = 3-hydroxypyruvate + NADPH + H(+). Catalyzes the NADPH-dependent reduction of glyoxylate and hydroxypyruvate into glycolate and glycerate, respectively. The chain is Glyoxylate/hydroxypyruvate reductase B from Shigella boydii serotype 4 (strain Sb227).